Consider the following 119-residue polypeptide: UPF0102 protein Sare_1228 (119 aa).

It belongs to the UPF0102 family.

The polypeptide is UPF0102 protein Sare_1228 (Salinispora arenicola (strain CNS-205)).